The following is a 57-amino-acid chain: Large ribosomal subunit protein uL30 (57 aa).

It belongs to the universal ribosomal protein uL30 family. As to quaternary structure, part of the 50S ribosomal subunit.

This Clostridium perfringens (strain ATCC 13124 / DSM 756 / JCM 1290 / NCIMB 6125 / NCTC 8237 / Type A) protein is Large ribosomal subunit protein uL30.